A 268-amino-acid chain; its full sequence is 4-hydroxy-tetrahydrodipicolinate reductase (268 aa).

NAD(+) contacts are provided by residues 8 to 13 (GAAGRM) and D35. R36 is an NADP(+) binding site. NAD(+) is bound by residues 99–101 (GTT) and 123–126 (AANF). The active-site Proton donor/acceptor is the H156. H157 lines the (S)-2,3,4,5-tetrahydrodipicolinate pocket. K160 serves as the catalytic Proton donor. 166 to 167 (GT) is a binding site for (S)-2,3,4,5-tetrahydrodipicolinate.

Belongs to the DapB family.

Its subcellular location is the cytoplasm. It carries out the reaction (S)-2,3,4,5-tetrahydrodipicolinate + NAD(+) + H2O = (2S,4S)-4-hydroxy-2,3,4,5-tetrahydrodipicolinate + NADH + H(+). It catalyses the reaction (S)-2,3,4,5-tetrahydrodipicolinate + NADP(+) + H2O = (2S,4S)-4-hydroxy-2,3,4,5-tetrahydrodipicolinate + NADPH + H(+). Its pathway is amino-acid biosynthesis; L-lysine biosynthesis via DAP pathway; (S)-tetrahydrodipicolinate from L-aspartate: step 4/4. Functionally, catalyzes the conversion of 4-hydroxy-tetrahydrodipicolinate (HTPA) to tetrahydrodipicolinate. This Pseudomonas aeruginosa (strain LESB58) protein is 4-hydroxy-tetrahydrodipicolinate reductase.